The chain runs to 123 residues: UPF0102 protein Maqu_2464 (123 aa).

It belongs to the UPF0102 family.

The chain is UPF0102 protein Maqu_2464 from Marinobacter nauticus (strain ATCC 700491 / DSM 11845 / VT8) (Marinobacter aquaeolei).